The following is a 438-amino-acid chain: Ribosomal protein uS12 methylthiotransferase RimO (438 aa).

The MTTase N-terminal domain maps to 1–116 (MNVGFISLGC…IWKEIENLLD (116 aa)). Cys-10, Cys-46, Cys-79, Cys-147, Cys-151, and Cys-154 together coordinate [4Fe-4S] cluster. Residues 133–363 (TTGSNMAYLK…MALQEKISRE (231 aa)) form the Radical SAM core domain. In terms of domain architecture, TRAM spans 366–435 (EQKVGNVYKV…DYDLFGELYT (70 aa)).

Belongs to the methylthiotransferase family. RimO subfamily. [4Fe-4S] cluster serves as cofactor.

Its subcellular location is the cytoplasm. The catalysed reaction is L-aspartate(89)-[ribosomal protein uS12]-hydrogen + (sulfur carrier)-SH + AH2 + 2 S-adenosyl-L-methionine = 3-methylsulfanyl-L-aspartate(89)-[ribosomal protein uS12]-hydrogen + (sulfur carrier)-H + 5'-deoxyadenosine + L-methionine + A + S-adenosyl-L-homocysteine + 2 H(+). Its function is as follows. Catalyzes the methylthiolation of an aspartic acid residue of ribosomal protein uS12. The polypeptide is Ribosomal protein uS12 methylthiotransferase RimO (Alkaliphilus oremlandii (strain OhILAs) (Clostridium oremlandii (strain OhILAs))).